Reading from the N-terminus, the 188-residue chain is Elongation factor P-like protein (188 aa).

This sequence belongs to the elongation factor P family.

The protein is Elongation factor P-like protein of Stenotrophomonas maltophilia (strain R551-3).